The sequence spans 370 residues: Lipoyl synthase, mitochondrial (370 aa).

Residues Cys-104, Cys-109, Cys-115, Cys-135, Cys-139, Cys-142, and Ser-350 each coordinate [4Fe-4S] cluster. The Radical SAM core domain occupies 118 to 339 (GGDKSKATAT…KQKALELGFL (222 aa)).

This sequence belongs to the radical SAM superfamily. Lipoyl synthase family. It depends on [4Fe-4S] cluster as a cofactor.

Its subcellular location is the mitochondrion. The catalysed reaction is [[Fe-S] cluster scaffold protein carrying a second [4Fe-4S](2+) cluster] + N(6)-octanoyl-L-lysyl-[protein] + 2 oxidized [2Fe-2S]-[ferredoxin] + 2 S-adenosyl-L-methionine + 4 H(+) = [[Fe-S] cluster scaffold protein] + N(6)-[(R)-dihydrolipoyl]-L-lysyl-[protein] + 4 Fe(3+) + 2 hydrogen sulfide + 2 5'-deoxyadenosine + 2 L-methionine + 2 reduced [2Fe-2S]-[ferredoxin]. It participates in protein modification; protein lipoylation via endogenous pathway; protein N(6)-(lipoyl)lysine from octanoyl-[acyl-carrier-protein]: step 2/2. Functionally, catalyzes the radical-mediated insertion of two sulfur atoms into the C-6 and C-8 positions of the octanoyl moiety bound to the lipoyl domains of lipoate-dependent enzymes, thereby converting the octanoylated domains into lipoylated derivatives. The polypeptide is Lipoyl synthase, mitochondrial (Kluyveromyces lactis (strain ATCC 8585 / CBS 2359 / DSM 70799 / NBRC 1267 / NRRL Y-1140 / WM37) (Yeast)).